Reading from the N-terminus, the 133-residue chain is Fatty acid-binding protein, heart (133 aa).

Ala2 carries the N-acetylalanine modification. At Thr8 the chain carries Phosphothreonine. Tyr20 carries the post-translational modification Phosphotyrosine; by Tyr-kinases. At Ser23 the chain carries Phosphoserine. Thr30 carries the phosphothreonine modification. Ser83 is modified (phosphoserine). 127 to 129 provides a ligand contact to (9Z)-octadecenoate; it reads RTY. 127–129 lines the hexadecanoate pocket; the sequence is RTY. Residue 127–129 participates in octadecanoate binding; it reads RTY.

The protein belongs to the calycin superfamily. Fatty-acid binding protein (FABP) family.

The protein localises to the cytoplasm. FABPs are thought to play a role in the intracellular transport of long-chain fatty acids and their acyl-CoA esters. This chain is Fatty acid-binding protein, heart (Fabp3), found in Mus musculus (Mouse).